Reading from the N-terminus, the 217-residue chain is MAFAVSTACRPSLLLPPRQRSSPPRPRPLLCTPSTAAFRRGALSATTTPTPARAALPSTTGRNRIVCGKVSKGSAAPNFTLRDQDGRAVSLSKFKGRPVVVYFYPADETPGCTKQACAFRDSYEKFKKAGAEVIGISGDDAASHKEFKKKYKLPFTLLSDEGNKVRKEWGVPADLFGTLPGRQTYVLDKNGVVQYIYNNQFQPEKHIGETLKILQSL.

A chloroplast-targeting transit peptide spans 1–66 (MAFAVSTACR…PSTTGRNRIV (66 aa)). Residues 70 to 217 (VSKGSAAPNF…GETLKILQSL (148 aa)) form the Thioredoxin domain. Cysteine 112 (cysteine sulfenic acid (-SOH) intermediate) is an active-site residue. Cysteines 112 and 117 form a disulfide.

This sequence belongs to the peroxiredoxin family. BCP/PrxQ subfamily. As to quaternary structure, monomer.

It is found in the plastid. The protein localises to the chloroplast thylakoid lumen. The enzyme catalyses a hydroperoxide + [thioredoxin]-dithiol = an alcohol + [thioredoxin]-disulfide + H2O. Thiol-specific peroxidase that catalyzes the reduction of hydrogen peroxide and organic hydroperoxides to water and alcohols, respectively. Plays a role in cell protection against oxidative stress by detoxifying peroxides. The chain is Putative peroxiredoxin Q, chloroplastic from Oryza sativa subsp. indica (Rice).